The chain runs to 604 residues: Putative JmjC domain-containing protein L887 (604 aa).

Residues 1–127 (MNNMKKIIII…PNNKLNLIQP (127 aa)) enclose the JmjC domain. The helical transmembrane segment at 4 to 24 (MKKIIIISIIIIIIIVLLFYI) threads the bilayer.

It localises to the membrane. This is Putative JmjC domain-containing protein L887 from Acanthamoeba polyphaga (Amoeba).